The sequence spans 370 residues: Chaperone protein DnaJ (370 aa).

Positions 5-70 (DYYEVLGVSK…EKRSMYDRMG (66 aa)) constitute a J domain. The CR-type zinc-finger motif lies at 134 to 212 (GVKKTITFTA…CHGSGVADRQ (79 aa)). 8 residues coordinate Zn(2+): Cys-147, Cys-150, Cys-164, Cys-167, Cys-186, Cys-189, Cys-200, and Cys-203. 4 CXXCXGXG motif repeats span residues 147 to 154 (CDVCDGKG), 164 to 171 (CKTCHGSG), 186 to 193 (CGTCRGQG), and 200 to 207 (CHACHGSG). The segment at 351–370 (DGEDSASSPKKKSFFDRLFD) is disordered.

Belongs to the DnaJ family. Homodimer. Requires Zn(2+) as cofactor.

Its subcellular location is the cytoplasm. In terms of biological role, participates actively in the response to hyperosmotic and heat shock by preventing the aggregation of stress-denatured proteins and by disaggregating proteins, also in an autonomous, DnaK-independent fashion. Unfolded proteins bind initially to DnaJ; upon interaction with the DnaJ-bound protein, DnaK hydrolyzes its bound ATP, resulting in the formation of a stable complex. GrpE releases ADP from DnaK; ATP binding to DnaK triggers the release of the substrate protein, thus completing the reaction cycle. Several rounds of ATP-dependent interactions between DnaJ, DnaK and GrpE are required for fully efficient folding. Also involved, together with DnaK and GrpE, in the DNA replication of plasmids through activation of initiation proteins. This Acinetobacter baumannii (strain AB0057) protein is Chaperone protein DnaJ.